We begin with the raw amino-acid sequence, 118 residues long: Small ribosomal subunit protein bS6 (118 aa).

It belongs to the bacterial ribosomal protein bS6 family.

Functionally, binds together with bS18 to 16S ribosomal RNA. This is Small ribosomal subunit protein bS6 from Parabacteroides distasonis (strain ATCC 8503 / DSM 20701 / CIP 104284 / JCM 5825 / NCTC 11152).